The following is a 310-amino-acid chain: MGNNMTLITEFILLGFPLSPRMQMLLFALFSLFYAFTLLGNGTIVGLICLDSRLHTPMYFFLSHLAIVDIAYACNTVPQMLVNLLDPVKPISYAGCMTQTFLFLTFAITECLLLVVMSYDRYVAICHPLRYSAIMSWRVCSTMAVTSWIIGVLLSLIHLVLLLPLPFCVSQKVNHFFCEITAILKLACADTHLNETMVLAGAVSVLVGPFSSIVVSYACILGAILKIQSEEGQRKAFSTCSSHLCVVGLFYGTAIVMYVGPRHGSPKEQKKYLLLFHSLFNPMLNPLIYSLRNSDVKNTLKRVLRTQRAL.

The Extracellular portion of the chain corresponds to 1 to 24; that stretch reads MGNNMTLITEFILLGFPLSPRMQM. Asn-4 is a glycosylation site (N-linked (GlcNAc...) asparagine). Residues 25–45 form a helical membrane-spanning segment; that stretch reads LLFALFSLFYAFTLLGNGTIV. At 46–53 the chain is on the cytoplasmic side; sequence GLICLDSR. A helical transmembrane segment spans residues 54 to 74; that stretch reads LHTPMYFFLSHLAIVDIAYAC. Topologically, residues 75–96 are extracellular; sequence NTVPQMLVNLLDPVKPISYAGC. A disulfide bridge connects residues Cys-96 and Cys-178. A helical transmembrane segment spans residues 97–117; that stretch reads MTQTFLFLTFAITECLLLVVM. The Cytoplasmic segment spans residues 118–148; sequence SYDRYVAICHPLRYSAIMSWRVCSTMAVTSW. The chain crosses the membrane as a helical span at residues 149–169; it reads IIGVLLSLIHLVLLLPLPFCV. The Extracellular portion of the chain corresponds to 170–204; that stretch reads SQKVNHFFCEITAILKLACADTHLNETMVLAGAVS. Asn-194 carries N-linked (GlcNAc...) asparagine glycosylation. Residues 205–225 traverse the membrane as a helical segment; it reads VLVGPFSSIVVSYACILGAIL. Residues 226-239 are Cytoplasmic-facing; the sequence is KIQSEEGQRKAFST. The chain crosses the membrane as a helical span at residues 240 to 260; that stretch reads CSSHLCVVGLFYGTAIVMYVG. The Extracellular portion of the chain corresponds to 261 to 273; it reads PRHGSPKEQKKYL. The chain crosses the membrane as a helical span at residues 274 to 291; that stretch reads LLFHSLFNPMLNPLIYSL. Topologically, residues 292–310 are cytoplasmic; the sequence is RNSDVKNTLKRVLRTQRAL.

This sequence belongs to the G-protein coupled receptor 1 family. Olfactory epithelium.

Its subcellular location is the cell membrane. Functionally, odorant receptor. The sequence is that of Olfactory receptor 2A7 from Mus musculus (Mouse).